Here is an 84-residue protein sequence, read N- to C-terminus: Acetylcholine receptor subunit alpha (84 aa).

A disulfide bridge links Cys-7 with Cys-21. N-linked (GlcNAc...) asparagine glycosylation is found at Asn-20 and Asn-66. A disulfide bond links Cys-71 and Cys-72.

The protein belongs to the ligand-gated ion channel (TC 1.A.9) family. Acetylcholine receptor (TC 1.A.9.1) subfamily. Alpha-1/CHRNA1 sub-subfamily. As to quaternary structure, one of the alpha chains that assemble within the acetylcholine receptor, a pentamer of two alpha chains, a beta, a delta, and a gamma (in immature muscle) or epsilon (in mature muscle) chains. The muscle heteropentamer composed of alpha-1, beta-1, delta, epsilon subunits interacts with the alpha-conotoxin ImII.

It localises to the postsynaptic cell membrane. It is found in the cell membrane. The catalysed reaction is K(+)(in) = K(+)(out). The enzyme catalyses Na(+)(in) = Na(+)(out). In terms of biological role, upon acetylcholine binding, the AChR responds by an extensive change in conformation that affects all subunits and leads to opening of an ion-conducting channel across the plasma membrane. The sequence is that of Acetylcholine receptor subunit alpha (CHRNA1) from Herpestes ichneumon (Egyptian mongoose).